The primary structure comprises 416 residues: Probable tRNA pseudouridine synthase D (416 aa).

The active-site Nucleophile is Asp83. The TRUD domain occupies 158–379 (GFPNYFGYQR…PGGRRELLIR (222 aa)).

It belongs to the pseudouridine synthase TruD family.

The enzyme catalyses uridine(13) in tRNA = pseudouridine(13) in tRNA. Functionally, could be responsible for synthesis of pseudouridine from uracil-13 in transfer RNAs. The sequence is that of Probable tRNA pseudouridine synthase D from Thermococcus onnurineus (strain NA1).